The primary structure comprises 202 residues: UMP-CMP kinase 3 (202 aa).

24–29 is a binding site for ATP; sequence GSGKGT. Positions 44-73 are NMP; it reads SAGDLLRAEIKSGSENGTMIQNMIKEGKIV. A ribonucleoside 5'-phosphate contacts are provided by residues Arg50, 71 to 73, and 98 to 101; these read KIV and GFPR. Asn105 is a CMP binding site. The LID stretch occupies residues 136-144; the sequence is GRNQGREDD. Arg137 contacts ATP. Residues Arg141 and Arg152 each contribute to the a ribonucleoside 5'-phosphate site. Position 180 (Lys180) interacts with ATP.

In terms of assembly, monomer. Mg(2+) is required as a cofactor.

The protein localises to the cytoplasm. It localises to the nucleus. The catalysed reaction is CMP + ATP = CDP + ADP. It carries out the reaction dCMP + ATP = dCDP + ADP. The enzyme catalyses UMP + ATP = UDP + ADP. In terms of biological role, catalyzes the phosphorylation of pyrimidine nucleoside monophosphates at the expense of ATP. Plays an important role in de novo pyrimidine nucleotide biosynthesis. Has preference for UMP and CMP as phosphate acceptors. Does not act on dCMP and dUMP. This chain is UMP-CMP kinase 3 (UMK3), found in Arabidopsis thaliana (Mouse-ear cress).